The following is a 428-amino-acid chain: MKICVVGAGYVGLTLSAALASIGHDMICTDKDVKKIGQLKKGVIPFYEPGLSDAILRCGNLSFSSEVKSSMEECPVIFIAVGTPPRSDGSADTKALQSVIGDLSEAIRSYKTIITKSTVPPGTNENIAKQLIASGVSKNLFNIVSNPEFLREGNALYDMLHPDKTVIGVQEEDHVSAAIVKSIYKHIDTPFIVTSLAGAELIKYANNFFLAAKISFINEMARICEAYQSDISDISRAIGLDPRIGKHFLQAGIGYGGSCFPKDLQALQFAAQEKNTETFLLRAVQHINDTQLGLYIKKIQSFFETLQGKKAAVLGISFKPNTDDIRNSQAVRLMERLAELGCDVHAYDPEAVLPEHLRQHVTQHSQAFDAIEESDFLFLATEWSEFLAFDWKKAADIMKGRLVIDGRNVLKKELIEACGLICTGVGRP.

Residues 1–23 form the signal peptide; the sequence is MKICVVGAGYVGLTLSAALASIG. Residues 2-19, valine 11, aspartate 30, lysine 35, threonine 118, and glutamate 152 contribute to the NAD(+) site; that span reads KICVVGAGYVGLTLSAAL. Residues 148–152, lysine 203, asparagine 207, 248–252, and glycine 256 each bind substrate; these read EFLRE and FLQAG. Residue cysteine 259 is the Nucleophile of the active site. Lysine 262 lines the NAD(+) pocket. Lysine 319 provides a ligand contact to substrate. Arginine 326 is an NAD(+) binding site.

It belongs to the UDP-glucose/GDP-mannose dehydrogenase family.

The catalysed reaction is UDP-alpha-D-glucose + 2 NAD(+) + H2O = UDP-alpha-D-glucuronate + 2 NADH + 3 H(+). Its pathway is nucleotide-sugar biosynthesis; UDP-alpha-D-glucuronate biosynthesis; UDP-alpha-D-glucuronate from UDP-alpha-D-glucose: step 1/1. Functionally, catalyzes the conversion of UDP-glucose into UDP-glucuronate, one of the precursors of teichuronic acid. The protein is Putative UDP-glucose 6-dehydrogenase YtcA (ytcA) of Bacillus subtilis (strain 168).